Consider the following 434-residue polypeptide: Glutamyl-tRNA reductase (434 aa).

Substrate contacts are provided by residues 49 to 52 (TCNR), serine 109, 114 to 116 (EPQ), and glutamine 120. Cysteine 50 serves as the catalytic Nucleophile. 189–194 (GAGEMC) is an NADP(+) binding site.

The protein belongs to the glutamyl-tRNA reductase family. As to quaternary structure, homodimer.

It carries out the reaction (S)-4-amino-5-oxopentanoate + tRNA(Glu) + NADP(+) = L-glutamyl-tRNA(Glu) + NADPH + H(+). Its pathway is porphyrin-containing compound metabolism; protoporphyrin-IX biosynthesis; 5-aminolevulinate from L-glutamyl-tRNA(Glu): step 1/2. In terms of biological role, catalyzes the NADPH-dependent reduction of glutamyl-tRNA(Glu) to glutamate 1-semialdehyde (GSA). The sequence is that of Glutamyl-tRNA reductase from Geobacter sulfurreducens (strain ATCC 51573 / DSM 12127 / PCA).